The chain runs to 146 residues: MNSLSIFFIVVATAAVCLLFIQGYSIYENYGNIKEFNATHAALEYSKSIGGTPALDRRVQDVNDTISDVKQKWRCVAYPGNGFVSASIFGFQAEVGPNNTRSIRKFNTMAQCIDFTFSDVINIDIYNPCVAPNINNVECQFLKSVL.

The chain crosses the membrane as a helical; Signal-anchor for type II membrane protein span at residues 1–21 (MNSLSIFFIVVATAAVCLLFI). Residues 22–146 (QGYSIYENYG…VECQFLKSVL (125 aa)) are Virion surface-facing.

This sequence belongs to the orthopoxvirus OPG155 protein family. In terms of assembly, part of a stable entry-fusion complex (EFC) which is at least composed of proteins OPG143, OPG147, OPG155, OPG086, OPG094, OPG107, OPG104, and OPG099. Formation of the viral membrane is necessary for the assembly of the complex. Interacts directly with protein OPG107. In terms of processing, contains two intramolecular disulfide bonds. They are created by the viral disulfide bond formation pathway, a poxvirus-specific pathway that operates on the cytoplasmic side of the MV membranes.

The protein resides in the virion membrane. In terms of biological role, envelope protein required for virus entry into host cell and for cell-cell fusion (syncytium formation). The protein is Envelope protein OPG155 (OPG155) of Camelus.